A 65-amino-acid polypeptide reads, in one-letter code: Small ribosomal subunit protein bS21 (65 aa).

The protein belongs to the bacterial ribosomal protein bS21 family.

This is Small ribosomal subunit protein bS21 from Aster yellows phytoplasma.